The chain runs to 299 residues: Acetyl-coenzyme A carboxylase carboxyl transferase subunit beta (299 aa).

One can recognise a CoA carboxyltransferase N-terminal domain in the interval 25-294 (VWTKCTSCEQ…PFVEPELIQE (270 aa)). Zn(2+)-binding residues include cysteine 29, cysteine 32, cysteine 48, and cysteine 51. Residues 29-51 (CTSCEQVLYRDELKRHLEVCPKC) form a C4-type zinc finger.

This sequence belongs to the AccD/PCCB family. As to quaternary structure, acetyl-CoA carboxylase is a heterohexamer composed of biotin carboxyl carrier protein (AccB), biotin carboxylase (AccC) and two subunits each of ACCase subunit alpha (AccA) and ACCase subunit beta (AccD). Requires Zn(2+) as cofactor.

The protein resides in the cytoplasm. It carries out the reaction N(6)-carboxybiotinyl-L-lysyl-[protein] + acetyl-CoA = N(6)-biotinyl-L-lysyl-[protein] + malonyl-CoA. It participates in lipid metabolism; malonyl-CoA biosynthesis; malonyl-CoA from acetyl-CoA: step 1/1. Functionally, component of the acetyl coenzyme A carboxylase (ACC) complex. Biotin carboxylase (BC) catalyzes the carboxylation of biotin on its carrier protein (BCCP) and then the CO(2) group is transferred by the transcarboxylase to acetyl-CoA to form malonyl-CoA. The polypeptide is Acetyl-coenzyme A carboxylase carboxyl transferase subunit beta (Histophilus somni (strain 129Pt) (Haemophilus somnus)).